We begin with the raw amino-acid sequence, 435 residues long: rRNA methyltransferase 3A, mitochondrial (435 aa).

A mitochondrion-targeting transit peptide spans 1-42 (MAALMYNVSRGLVMLGERSLFQRERYQILVNSRRFLRGLRRR). The segment covering 314-324 (KQLVSGQTENV) has biased composition (polar residues). Positions 314–351 (KQLVSGQTENVSSDDYSESDSDDDDDEEEDEDSLPHVK) are disordered. Residues 328–345 (DYSESDSDDDDDEEEDED) show a composition bias toward acidic residues. The S-adenosyl-L-methionine site is built by G369 and L402.

The protein belongs to the class IV-like SAM-binding methyltransferase superfamily. RNA methyltransferase TrmH family.

Its subcellular location is the mitochondrion. The enzyme catalyses a uridine in rRNA + S-adenosyl-L-methionine = a 2'-O-methyluridine in rRNA + S-adenosyl-L-homocysteine + H(+). Functionally, S-adenosyl-L-methionine-dependent 2'-O-ribose methyltransferase that catalyzes the formation of 2'-O-methylguanosine at position 1485 (Gm1485) in the mitochondrial large subunit ribosomal RNA (mtLSU rRNA), a conserved modification in the peptidyl transferase domain of the mtLSU rRNA. Also required for formation of 2'-O-methyluridine at position 1484 (Um1484) mediated by MRM2. The sequence is that of rRNA methyltransferase 3A, mitochondrial (mrm3a) from Danio rerio (Zebrafish).